The sequence spans 511 residues: Maturase K (511 aa).

Belongs to the intron maturase 2 family. MatK subfamily.

The protein resides in the plastid. The protein localises to the chloroplast. In terms of biological role, usually encoded in the trnK tRNA gene intron. Probably assists in splicing its own and other chloroplast group II introns. The chain is Maturase K from Bromus inermis (Smooth brome grass).